The following is a 111-amino-acid chain: uncharacterized protein (111 aa).

This sequence belongs to the SUI1 family.

This is an uncharacterized protein from Synechocystis sp. (strain ATCC 27184 / PCC 6803 / Kazusa).